Here is an 899-residue protein sequence, read N- to C-terminus: MCPLQIHVLHLIQGNQKNRKGKYVNMTRQLWYILPLLFLLCHCVTSERRCYFSKISKTCSHASKCLLKADCSDRNLTESPKFNESVVQIDLSNNSINVFPDLPRSLLVLDISRNPLKQFQKNAFARLQNLTTLSIVNNTYGLQPSNLTAGIFKGLTRLTYLDLRGSWNGTAYPEEVLSDLVSLNALRINGKQKGFGVLMRKIHALKRLDISGSEGDCKIDCLHAGYFQNVHGIQELNVSNCHLTNILEGTFSYITNLTHLDISYNEELSFNILRNISKDLKNTKIEVLKINKIHCTFGVGTQIYVSDLKDLQNTSLRELHANSNRLETIQSGVLMYLPKTLQHASVSDNKLTMGMYALETANLVNLKTYDMSLQFKSHDPRDIFSNCNDTRNGYIRNRRPHESEGEISVRKKLLNDQIYRWKDDQAFEVYQNTSNNNQHKLMFPFPSPFPVPLPQRLEIAYFNTSTLHYPLLKYRIGNNKIKEIYAQDNVFYDLQGPLENLEGLEILDLSNNFCTNLSTFFFDYLTGLKSVKLNHNILGFSLAKDEKGETFKNLLKLKHLEIKYNRIQVLPKKILRNLISLETLDLADNWLRKFKVDLKHIKGLRHIDLSNNQISELPPGVMRELDEIAKSSNLTVNLTGNSLLCNCENEHFLRWIVTSTIRFGFHGNDTCQTRFSKTGRVLMSQGNEFLLVLERNCRSYTAVIVLFSCVFVILLTVIVCGVVYRYRWKLRYLYYMTKGRYKGYSSLKTKSEEGDYEFDAFISYADEDRQFALHDMMKNVEREGNLKLCFHNRDFIPGFDIAVNITNAINNSRKTICVISSNYLNSYWCMYELNIGRMESIYSRNGEDVLFLVILENCSSSNIPFSVFDIIEKKSYIEYPNDTEGDIIFWRKLRDPISM.

The first 46 residues, 1–46, serve as a signal peptide directing secretion; that stretch reads MCPLQIHVLHLIQGNQKNRKGKYVNMTRQLWYILPLLFLLCHCVTS. N-linked (GlcNAc...) asparagine glycans are attached at residues N25, N75, N83, and N93. At 47–702 the chain is on the extracellular side; that stretch reads ERRCYFSKIS…LERNCRSYTA (656 aa). LRR repeat units lie at residues 83–103, 104–126, 128–150, 155–179, 181–202, 203–229, and 230–253; these read NESV…PDLP, RSLL…AFAR, QNLT…LTAG, LTRL…VLSD, VSLN…MRKI, HALK…YFQN, and VHGI…TFSY. N129, N137, N146, and N168 each carry an N-linked (GlcNAc...) asparagine glycan. 4 N-linked (GlcNAc...) asparagine glycosylation sites follow: N237, N256, N275, and N313. 4 LRR repeats span residues 257–282, 313–336, 338–360, and 363–386; these read LTHL…DLKN, NTSL…VLMY, PKTL…ALET, and LVNL…IFSN. N-linked (GlcNAc...) asparagine glycosylation is found at N388, N432, and N463. LRR repeat units follow at residues 468–493, 501–524, 526–549, 554–577, 579–601, 602–624, and 631–654; these read HYPL…VFYD, LEGL…FFDY, TGLK…EKGE, LLKL…ILRN, ISLE…LKHI, KGLR…VMRE, and SSNL…HFLR. N516 is a glycosylation site (N-linked (GlcNAc...) asparagine). 3 N-linked (GlcNAc...) asparagine glycosylation sites follow: N633, N637, and N668. Residues 703-723 traverse the membrane as a helical segment; it reads VIVLFSCVFVILLTVIVCGVV. Residues 724-899 lie on the Cytoplasmic side of the membrane; that stretch reads YRYRWKLRYL…WRKLRDPISM (176 aa). In terms of domain architecture, TIR spans 756 to 897; the sequence is YEFDAFISYA…IFWRKLRDPI (142 aa).

This sequence belongs to the Toll-like receptor family. In terms of tissue distribution, expressed in all tissues tested. The highest expression is in the hepatopancreas, with moderate expression in the gills, and low expression in the gonads, adductor muscle, hemocytes, and mantle.

The protein localises to the cell membrane. In terms of biological role, may be involved in the innate immune response. The polypeptide is Toll-like receptor 4 (Pinctada imbricata (Atlantic pearl-oyster)).